The sequence spans 188 residues: GMP synthase [glutamine-hydrolyzing] subunit A (188 aa).

The Glutamine amidotransferase type-1 domain occupies K2–K188. C79 acts as the Nucleophile in catalysis. Residues H166 and E168 contribute to the active site.

Heterodimer composed of a glutamine amidotransferase subunit (A) and a GMP-binding subunit (B).

It catalyses the reaction XMP + L-glutamine + ATP + H2O = GMP + L-glutamate + AMP + diphosphate + 2 H(+). It participates in purine metabolism; GMP biosynthesis; GMP from XMP (L-Gln route): step 1/1. Functionally, catalyzes the synthesis of GMP from XMP. This Sulfurisphaera tokodaii (strain DSM 16993 / JCM 10545 / NBRC 100140 / 7) (Sulfolobus tokodaii) protein is GMP synthase [glutamine-hydrolyzing] subunit A.